The chain runs to 419 residues: UDP-N-acetylglucosamine 1-carboxyvinyltransferase (419 aa).

22-23 contacts phosphoenolpyruvate; sequence KN. Residue Arg95 participates in UDP-N-acetyl-alpha-D-glucosamine binding. Cys119 (proton donor) is an active-site residue. At Cys119 the chain carries 2-(S-cysteinyl)pyruvic acid O-phosphothioketal. UDP-N-acetyl-alpha-D-glucosamine contacts are provided by residues 164–167, Asp308, and Ile330; that span reads KVSV.

It belongs to the EPSP synthase family. MurA subfamily.

The protein resides in the cytoplasm. It catalyses the reaction phosphoenolpyruvate + UDP-N-acetyl-alpha-D-glucosamine = UDP-N-acetyl-3-O-(1-carboxyvinyl)-alpha-D-glucosamine + phosphate. It functions in the pathway cell wall biogenesis; peptidoglycan biosynthesis. Functionally, cell wall formation. Adds enolpyruvyl to UDP-N-acetylglucosamine. The sequence is that of UDP-N-acetylglucosamine 1-carboxyvinyltransferase from Rickettsia conorii (strain ATCC VR-613 / Malish 7).